A 357-amino-acid chain; its full sequence is SPbeta prophage-derived pesticidal crystal protein-like YokG (357 aa).

The protein belongs to the cry6A endotoxin family.

The sequence is that of SPbeta prophage-derived pesticidal crystal protein-like YokG (yokG) from Bacillus subtilis (strain 168).